Here is a 372-residue protein sequence, read N- to C-terminus: Lipoyl synthase (372 aa).

The [4Fe-4S] cluster site is built by cysteine 37, cysteine 42, cysteine 48, cysteine 63, cysteine 67, cysteine 70, and serine 292. The Radical SAM core domain maps to 49-281 (WREGTATVML…ERAALEMGFL (233 aa)). The disordered stretch occupies residues 338 to 372 (LTAELDPDEPRPPVAPAPASASPARLVPAASLIRR). Low complexity predominate over residues 354–372 (APASASPARLVPAASLIRR).

The protein belongs to the radical SAM superfamily. Lipoyl synthase family. The cofactor is [4Fe-4S] cluster.

Its subcellular location is the cytoplasm. It carries out the reaction [[Fe-S] cluster scaffold protein carrying a second [4Fe-4S](2+) cluster] + N(6)-octanoyl-L-lysyl-[protein] + 2 oxidized [2Fe-2S]-[ferredoxin] + 2 S-adenosyl-L-methionine + 4 H(+) = [[Fe-S] cluster scaffold protein] + N(6)-[(R)-dihydrolipoyl]-L-lysyl-[protein] + 4 Fe(3+) + 2 hydrogen sulfide + 2 5'-deoxyadenosine + 2 L-methionine + 2 reduced [2Fe-2S]-[ferredoxin]. The protein operates within protein modification; protein lipoylation via endogenous pathway; protein N(6)-(lipoyl)lysine from octanoyl-[acyl-carrier-protein]: step 2/2. In terms of biological role, catalyzes the radical-mediated insertion of two sulfur atoms into the C-6 and C-8 positions of the octanoyl moiety bound to the lipoyl domains of lipoate-dependent enzymes, thereby converting the octanoylated domains into lipoylated derivatives. This Sorangium cellulosum (strain So ce56) (Polyangium cellulosum (strain So ce56)) protein is Lipoyl synthase.